The sequence spans 344 residues: uncharacterized protein (344 aa).

The disordered stretch occupies residues 304–344; that stretch reads AVPAPTPRRPLDSVLQIRQTPEKGRNASDRNARETGWFSPP. A compositionally biased stretch (basic and acidic residues) spans 323–336; it reads TPEKGRNASDRNAR.

This is an uncharacterized protein from Mycobacterium tuberculosis (strain CDC 1551 / Oshkosh).